The following is a 742-amino-acid chain: Cullin-2 (742 aa).

The Cullin neddylation domain occupies 672 to 734 (DRRYAIDAAL…RDYLERDTDN (63 aa)). K686 is covalently cross-linked (Glycyl lysine isopeptide (Lys-Gly) (interchain with G-Cter in NEDD8)).

Belongs to the cullin family. Interacts with SKIP17 and FBW2/SKIP18. In terms of processing, neddylated; which enhances the ubiquitination activity of E3 ubiquitin-protein ligase complexes.

Functionally, core component of multiple SCF (SKP1-CUL1-F-box protein) E3 ubiquitin-protein ligase complexes. Involved in ubiquitination and subsequent proteasomal degradation of target proteins. The chain is Cullin-2 (CUL2) from Arabidopsis thaliana (Mouse-ear cress).